The primary structure comprises 412 residues: Zinc finger protein 821 (412 aa).

Residues 26–83 form a disordered region; that stretch reads RQAMMKTDFPGDLGSQRQAIQQLRDQDSSSSDSEGDEEETTQDEVSSHTSEEDGGVVK. A compositionally biased stretch (acidic residues) spans 58–67; it reads SEGDEEETTQ. 2 consecutive C2H2-type zinc fingers follow at residues 116–140 and 150–172; these read ELCQ…VYQH and YMCP…LLIH. Positions 257–366 form a coiled coil; it reads KWALRRQNEP…EKMDMMLRAQ (110 aa). Residues 278–319 are disordered; sequence RTAKKSRRDNETPEEREVRRMRDREAKRLQRMQETDEQRARR.

It belongs to the krueppel C2H2-type zinc-finger protein family.

Its subcellular location is the nucleus. May be involved in transcriptional regulation. The chain is Zinc finger protein 821 (ZNF821) from Homo sapiens (Human).